The chain runs to 241 residues: ATP synthase subunit a (241 aa).

7 helical membrane-spanning segments follow: residues 29 to 49 (NSSL…LLGV), 86 to 106 (IPLV…GMLP), 114 to 134 (HVIV…IVGF), 144 to 164 (ILLP…IKLF), 177 to 197 (LAAN…FIMN), 200 to 220 (LILT…EVFV), and 221 to 241 (AILQ…DAVK).

Belongs to the ATPase A chain family. F-type ATPases have 2 components, CF(1) - the catalytic core - and CF(0) - the membrane proton channel. CF(1) has five subunits: alpha(3), beta(3), gamma(1), delta(1), epsilon(1). CF(0) has three main subunits: a(1), b(2) and c(9-12). The alpha and beta chains form an alternating ring which encloses part of the gamma chain. CF(1) is attached to CF(0) by a central stalk formed by the gamma and epsilon chains, while a peripheral stalk is formed by the delta and b chains.

The protein localises to the cell membrane. Key component of the proton channel; it plays a direct role in the translocation of protons across the membrane. This is ATP synthase subunit a from Wolbachia sp. subsp. Brugia malayi (strain TRS).